The primary structure comprises 504 residues: Nuclear hormone receptor family member nhr-80 (504 aa).

Residues 27–103 (STRCLICSAQ…NGMKPGGVQP (77 aa)) constitute a DNA-binding region (nuclear receptor). NR C4-type zinc fingers lie at residues 30–50 (CLIC…CSAC) and 66–86 (CITG…CRSC). Positions 177-192 (SSSTSFSASTTTNYST) are enriched in low complexity. Residues 177-199 (SSSTSFSASTTTNYSTPGPSPMA) are disordered. Residues 214–466 (EEMKLGERRR…KLVLQLLNLD (253 aa)) form the NR LBD domain. Positions 455-466 (LDKLVLQLLNLD) are AF-2.

It belongs to the nuclear hormone receptor family. In terms of assembly, interacts with nuclear hormone receptor nhr-49; the interaction is direct. In terms of tissue distribution, expressed in the intestine and in some head and tail neurons, as well as the ventral nerve cord.

The protein resides in the nucleus. Functionally, transcription factor. Binds to regulatory elements and regulates transcription of target genes, including acyltransferase dgat-2. As part of a lysosome-to-nucleus retrograde lipid signaling pathway, acts as a direct nuclear receptor of oleoylethanolamide (OEA) and, acting in concert with nuclear hormone receptor nhr-49, activates the transcription of genes promoting longevity and mitochondrial beta-oxidation. Required to modulate expression of delta-9 fatty acid desaturases, thereby regulating lipid metabolism; in some contexts, acting in concert with nhr-49. Involved in modulation of lipid metabolism in response to the citrate-induced mitochondrial unfolded protein response (mtUPR), acting downstream of transcription factor dve-1 and ubiquitin-like protein 5. Plays a role in modulating mitochondrial morphology and function. Involved in positively modulating life-span in a germline-dependent manner, acting in concert with nuclear hormone receptor daf-12. Plays a role in transgenerational lipid accumulation in response to a high-fat diet. This Caenorhabditis elegans protein is Nuclear hormone receptor family member nhr-80.